The chain runs to 768 residues: 5-methyltetrahydropteroyltriglutamate--homocysteine methyltransferase (768 aa).

Residues 17–20 (RELK) and lysine 117 each bind 5-methyltetrahydropteroyltri-L-glutamate. Residues 442 to 444 (IGS) and glutamate 495 contribute to the L-homocysteine site. L-methionine is bound by residues 442–444 (IGS) and glutamate 495. 5-methyltetrahydropteroyltri-L-glutamate contacts are provided by residues 526 to 527 (RC) and tryptophan 572. Aspartate 610 contributes to the L-homocysteine binding site. Aspartate 610 serves as a coordination point for L-methionine. Glutamate 616 serves as a coordination point for 5-methyltetrahydropteroyltri-L-glutamate. Zn(2+)-binding residues include histidine 653, cysteine 655, and glutamate 677. Residue histidine 706 is the Proton donor of the active site. Cysteine 738 is a Zn(2+) binding site.

This sequence belongs to the vitamin-B12 independent methionine synthase family. Zn(2+) serves as cofactor.

It carries out the reaction 5-methyltetrahydropteroyltri-L-glutamate + L-homocysteine = tetrahydropteroyltri-L-glutamate + L-methionine. Its pathway is amino-acid biosynthesis; L-methionine biosynthesis via de novo pathway; L-methionine from L-homocysteine (MetE route): step 1/1. In terms of biological role, catalyzes the transfer of a methyl group from 5-methyltetrahydrofolate to homocysteine resulting in methionine formation. This Bifidobacterium adolescentis (strain ATCC 15703 / DSM 20083 / NCTC 11814 / E194a) protein is 5-methyltetrahydropteroyltriglutamate--homocysteine methyltransferase.